The sequence spans 314 residues: Homoserine O-acetyltransferase (314 aa).

Cys-142 (acyl-thioester intermediate) is an active-site residue. Residues Lys-163 and Ser-192 each coordinate substrate. His-235 (proton acceptor) is an active-site residue. The active site involves Glu-237. Arg-249 provides a ligand contact to substrate.

It belongs to the MetA family.

The protein localises to the cytoplasm. The enzyme catalyses L-homoserine + acetyl-CoA = O-acetyl-L-homoserine + CoA. The protein operates within amino-acid biosynthesis; L-methionine biosynthesis via de novo pathway; O-acetyl-L-homoserine from L-homoserine: step 1/1. Its function is as follows. Transfers an acetyl group from acetyl-CoA to L-homoserine, forming acetyl-L-homoserine. This is Homoserine O-acetyltransferase from Streptococcus thermophilus (strain ATCC BAA-250 / LMG 18311).